Consider the following 109-residue polypeptide: A-type ATP synthase subunit F (109 aa).

It belongs to the V-ATPase F subunit family. Has multiple subunits with at least A(3), B(3), C, D, E, F, H, I and proteolipid K(x).

The protein localises to the cell membrane. Component of the A-type ATP synthase that produces ATP from ADP in the presence of a proton gradient across the membrane. In Haloquadratum walsbyi (strain DSM 16790 / HBSQ001), this protein is A-type ATP synthase subunit F.